We begin with the raw amino-acid sequence, 411 residues long: Fructose-1,6-bisphosphatase, chloroplastic (411 aa).

The transit peptide at 1-53 (MAATAGATPSSHLLLSSSRHVAASPQPRILFPSLSGKRVAVGKNHHATGVRCM) directs the protein to the chloroplast. The Mg(2+) site is built by E133, E162, D183, L185, and D186. 186–189 (DGSS) lines the substrate pocket. Cysteines 227 and 232 form a disulfide. Residues N291, Y323, Y341, Y343, and K353 each coordinate substrate. E359 provides a ligand contact to Mg(2+).

Belongs to the FBPase class 1 family. As to quaternary structure, homotetramer. It depends on Mg(2+) as a cofactor.

It localises to the plastid. It is found in the chloroplast stroma. It carries out the reaction beta-D-fructose 1,6-bisphosphate + H2O = beta-D-fructose 6-phosphate + phosphate. Its pathway is carbohydrate biosynthesis; Calvin cycle. This is Fructose-1,6-bisphosphatase, chloroplastic (FBP) from Brassica napus (Rape).